A 197-amino-acid polypeptide reads, in one-letter code: Potassium-transporting ATPase KdpC subunit (197 aa).

Residues L9–G29 form a helical membrane-spanning segment.

This sequence belongs to the KdpC family. The system is composed of three essential subunits: KdpA, KdpB and KdpC.

It localises to the cell inner membrane. Its function is as follows. Part of the high-affinity ATP-driven potassium transport (or Kdp) system, which catalyzes the hydrolysis of ATP coupled with the electrogenic transport of potassium into the cytoplasm. This subunit acts as a catalytic chaperone that increases the ATP-binding affinity of the ATP-hydrolyzing subunit KdpB by the formation of a transient KdpB/KdpC/ATP ternary complex. The chain is Potassium-transporting ATPase KdpC subunit from Nitratidesulfovibrio vulgaris (strain DSM 19637 / Miyazaki F) (Desulfovibrio vulgaris).